Consider the following 604-residue polypeptide: Sulfite reductase [NADPH] flavoprotein alpha-component (604 aa).

The Flavodoxin-like domain occupies 66–204 (VTVLSASQTG…AADGWTGRIV (139 aa)). FMN-binding positions include 72-77 (SQTGNA), 119-122 (STQG), and 155-164 (LGDSSYPNFC). The disordered stretch occupies residues 212-231 (AKNRATPAPQTTPPAGLQTA). A compositionally biased stretch (low complexity) spans 216-231 (ATPAPQTTPPAGLQTA). The FAD-binding FR-type domain occupies 239–453 (ADPFPAALLA…VERNDGFRLP (215 aa)). Residues Thr327, Gln361, 391 to 394 (RLYS), 409 to 411 (TVG), and 424 to 427 (GGAS) contribute to the FAD site. NADP(+)-binding positions include 524–525 (SR), 530–534 (KIYVQ), and Asp566. Tyr604 provides a ligand contact to FAD.

The protein belongs to the NADPH-dependent sulphite reductase flavoprotein subunit CysJ family. In the N-terminal section; belongs to the flavodoxin family. This sequence in the C-terminal section; belongs to the flavoprotein pyridine nucleotide cytochrome reductase family. Alpha(8)-beta(8). The alpha component is a flavoprotein, the beta component is a hemoprotein. It depends on FAD as a cofactor. FMN is required as a cofactor.

The enzyme catalyses hydrogen sulfide + 3 NADP(+) + 3 H2O = sulfite + 3 NADPH + 4 H(+). It participates in sulfur metabolism; hydrogen sulfide biosynthesis; hydrogen sulfide from sulfite (NADPH route): step 1/1. In terms of biological role, component of the sulfite reductase complex that catalyzes the 6-electron reduction of sulfite to sulfide. This is one of several activities required for the biosynthesis of L-cysteine from sulfate. The flavoprotein component catalyzes the electron flow from NADPH -&gt; FAD -&gt; FMN to the hemoprotein component. The protein is Sulfite reductase [NADPH] flavoprotein alpha-component of Neisseria meningitidis serogroup C / serotype 2a (strain ATCC 700532 / DSM 15464 / FAM18).